Consider the following 495-residue polypeptide: Trimethylamine methyltransferase MttB (495 aa).

Pyrrolysine 334 is a non-standard amino acid (pyrrolysine).

It belongs to the trimethylamine methyltransferase family. As to quaternary structure, can form a complex with MttC.

The catalysed reaction is Co(I)-[trimethylamine-specific corrinoid protein] + trimethylamine + H(+) = methyl-Co(III)-[trimethylamine-specific corrinoid protein] + dimethylamine. The protein operates within one-carbon metabolism; methanogenesis from trimethylamine. Functionally, catalyzes the transfer of a methyl group from trimethylamine to the corrinoid cofactor of MttC. The sequence is that of Trimethylamine methyltransferase MttB from Methanosarcina barkeri.